We begin with the raw amino-acid sequence, 153 residues long: MNIIEGKLIGQSLKFGITIGRFNEFIGGKLLDGAVDALIRHGVDEKDIEIAWVPGAFEIPLIAKKMAKSKKYDGIICLGAVIRGATTHYDYVASEVSKGIAKITLDEEVPVIFGVLTTENIEQAIERAGTKAGNKGYEAACTAIEMANIINII.

5-amino-6-(D-ribitylamino)uracil-binding positions include Phe22, 56–58 (AFE), and 80–82 (AVI). Residue 85-86 (AT) coordinates (2S)-2-hydroxy-3-oxobutyl phosphate. His88 acts as the Proton donor in catalysis. Phe113 lines the 5-amino-6-(D-ribitylamino)uracil pocket. Residue Arg127 participates in (2S)-2-hydroxy-3-oxobutyl phosphate binding.

Belongs to the DMRL synthase family.

It catalyses the reaction (2S)-2-hydroxy-3-oxobutyl phosphate + 5-amino-6-(D-ribitylamino)uracil = 6,7-dimethyl-8-(1-D-ribityl)lumazine + phosphate + 2 H2O + H(+). It participates in cofactor biosynthesis; riboflavin biosynthesis; riboflavin from 2-hydroxy-3-oxobutyl phosphate and 5-amino-6-(D-ribitylamino)uracil: step 1/2. Its function is as follows. Catalyzes the formation of 6,7-dimethyl-8-ribityllumazine by condensation of 5-amino-6-(D-ribitylamino)uracil with 3,4-dihydroxy-2-butanone 4-phosphate. This is the penultimate step in the biosynthesis of riboflavin. In Clostridium tetani (strain Massachusetts / E88), this protein is 6,7-dimethyl-8-ribityllumazine synthase.